The following is a 348-amino-acid chain: Protein pelota homolog (348 aa).

This sequence belongs to the eukaryotic release factor 1 family. Pelota subfamily. As to quaternary structure, monomer. The cofactor is a divalent metal cation.

The protein resides in the cytoplasm. Functionally, may function in recognizing stalled ribosomes, interact with stem-loop structures in stalled mRNA molecules, and effect endonucleolytic cleavage of the mRNA. May play a role in the release non-functional ribosomes and degradation of damaged mRNAs. Has endoribonuclease activity. The protein is Protein pelota homolog of Methanococcus maripaludis (strain C5 / ATCC BAA-1333).